Here is a 957-residue protein sequence, read N- to C-terminus: Collagen alpha-1(XXI) chain (957 aa).

Residues 1 to 22 (MAHYITFLCMVLVLLLQNSVLA) form the signal peptide. The VWFA domain maps to 37 to 211 (DLVFILDGSY…KIREVMKQKL (175 aa)). N-linked (GlcNAc...) asparagine glycosylation occurs at Asn-62. Positions 230–412 (GFDILLGLDV…VQKLRIYCDP (183 aa)) constitute a Laminin G-like domain. Collagen-like domains follow at residues 448–500 (PGKP…GARG), 501–542 (LPGY…GDKG), and 543–594 (SPGF…SPGA). Disordered regions lie at residues 448-786 (PGKP…KPGR) and 825-938 (GSPG…ICDP). Low complexity-rich tracts occupy residues 451–462 (PGLQGPKGDPGL) and 471–481 (QPGQDGKPGYQ). The segment covering 507-517 (EPGRDGDKGDR) has biased composition (basic and acidic residues). Low complexity-rich tracts occupy residues 618–637 (QKGEIGPPGQQGKKGAPGMP) and 705–729 (EKGIQGQKGENGRQGIPGQQGIQGH). Collagen-like domains are found at residues 681–733 (SPGE…HGAK), 734–787 (GERG…PGRE), 825–882 (GSPG…GSQG), and 884–934 (GYPG…GPPG). A compositionally biased stretch (basic and acidic residues) spans 732-742 (AKGERGEKGEP). Residues 829–838 (IPGPPGPIGP) are compositionally biased toward pro residues. Residues 839-874 (EGPRGLPGLPGRDGVPGLVGVPGRPGVRGLKGLPGR) show a composition bias toward low complexity. The segment covering 889–900 (QGPPGPPGPEGP) has biased composition (pro residues).

Belongs to the fibril-associated collagens with interrupted helices (FACIT) family. Highly expressed in lymph node, jejunum, pancreas, stomach, trachea, testis, uterus and placenta; moderately expressed in brain, colon, lung, prostate, spinal cord, salivary gland and vascular smooth-muscle cells and very weakly expressed in heart, liver, kidney, bone marrow, spleen, thymus, skeletal muscle, adrenal gland and peripheral leukocytes. Expression in heart was higher in the right ventricle and atrium than in the left ventricle and atrium.

The protein localises to the secreted. Its subcellular location is the extracellular space. It localises to the extracellular matrix. It is found in the cytoplasm. This Homo sapiens (Human) protein is Collagen alpha-1(XXI) chain (COL21A1).